We begin with the raw amino-acid sequence, 61 residues long: uncharacterized protein (61 aa).

This is an uncharacterized protein from Haemophilus influenzae (strain ATCC 51907 / DSM 11121 / KW20 / Rd).